Reading from the N-terminus, the 209-residue chain is MNPSMKQKQEEIKENIKNSSVPRRTLKMIQPSASGSLVGRENELSAGLSKRKHRNDHLTSTTSSPGVIVPESSENKNLGGVTQESFDLMIKENPSSQYWKEVAEKRRKALYEALKENEKLHKEIEQKDNEIARLKKENKELAEVAEHVQYMAELIERLNGEPLDNFESLDNQEFDSEEETVEDSLVEDSEIGTCAEGTVSSSTDAKPCI.

A disordered region spans residues 1-79 (MNPSMKQKQE…PESSENKNLG (79 aa)). Residues 7-16 (QKQEEIKENI) are compositionally biased toward basic and acidic residues. The residue at position 27 (Lys-27) is an N6-acetyllysine. Residues Ser-34, Ser-36, Ser-49, Ser-63, and Ser-64 each carry the phosphoserine modification. The segment at 82–161 (TQESFDLMIK…AELIERLNGE (80 aa)) is necessary and sufficient for interaction with IDAS and CDT1. A coiled-coil region spans residues 94 to 144 (PSSQYWKEVAEKRRKALYEALKENEKLHKEIEQKDNEIARLKKENKELAEV). A disordered region spans residues 164–209 (DNFESLDNQEFDSEEETVEDSLVEDSEIGTCAEGTVSSSTDAKPCI). A homeodomain binding region spans residues 170-190 (DNQEFDSEEETVEDSLVEDSE). Positions 170 to 190 (DNQEFDSEEETVEDSLVEDSE) are enriched in acidic residues. A Phosphoserine; by CK2 modification is found at Ser-184. Polar residues predominate over residues 198 to 209 (TVSSSTDAKPCI).

This sequence belongs to the geminin family. Homotetramer. Interacts with CDT1; this inhibits binding of the MCM complex to origins of replication. The complex with CDT1 exists in two forms, a 'permissive' heterotrimer and an 'inhibitory' heterohexamer. Interacts (via coiled-coil domain) with IDAS (via coiled-coil domain); this targets GMNN to the nucleus. The heterodimer formed by GMNN and MCIDAS has much lower affinity for CDT1 than the GMNN homodimer. Interacts with a subset of Hox proteins, affinity increasing from anterior to posterior types, the strongest interaction being with HOXB1, HOXC9 and HOXD10. Interacts with LRWD1 from G1/S to mitosis. In terms of processing, phosphorylated during mitosis. Phosphorylation at Ser-184 by CK2 results in enhanced binding to Hox proteins and more potent inhibitory effect on Hox transcriptional activity.

Its subcellular location is the cytoplasm. It is found in the nucleus. Inhibits DNA replication by preventing the incorporation of MCM complex into pre-replication complex (pre-RC). It is degraded during the mitotic phase of the cell cycle. Its destruction at the metaphase-anaphase transition permits replication in the succeeding cell cycle. Inhibits histone acetyltransferase activity of KAT7/HBO1 in a CDT1-dependent manner, inhibiting histone H4 acetylation and DNA replication licensing. Inhibits the transcriptional activity of a subset of Hox proteins, enrolling them in cell proliferative control. This is Geminin (GMNN) from Homo sapiens (Human).